The sequence spans 274 residues: Diaminopimelate epimerase (274 aa).

Positions 11, 44, and 64 each coordinate substrate. The active-site Proton donor is Cys-73. Substrate contacts are provided by residues 74–75 (GN), Asn-157, Asn-190, and 208–209 (ER). Catalysis depends on Cys-217, which acts as the Proton acceptor. Position 218–219 (218–219 (GS)) interacts with substrate.

This sequence belongs to the diaminopimelate epimerase family. As to quaternary structure, homodimer.

It is found in the cytoplasm. The catalysed reaction is (2S,6S)-2,6-diaminopimelate = meso-2,6-diaminopimelate. It functions in the pathway amino-acid biosynthesis; L-lysine biosynthesis via DAP pathway; DL-2,6-diaminopimelate from LL-2,6-diaminopimelate: step 1/1. In terms of biological role, catalyzes the stereoinversion of LL-2,6-diaminopimelate (L,L-DAP) to meso-diaminopimelate (meso-DAP), a precursor of L-lysine and an essential component of the bacterial peptidoglycan. This chain is Diaminopimelate epimerase, found in Pectobacterium carotovorum subsp. carotovorum (strain PC1).